The primary structure comprises 506 residues: MNTMTLTPGQLSLSQLYDVWRHPVQLRLDASAIDGINASVACVNDIVAEGRTAYGINTGFGLLAQTRIADEDLQNLQRSLVLSHAAGVGDPLDDAMVRLIMVLKINSLARGCSGIRLSVIEALIALVNAGVYPLIPAKGSVGASGDLAPLAHLSLMLLGEGKARWQGEWLPAQTALKKAGLEPVALAAKEGLALLNGTQASTAFALRGLFEAQELFASAVVCGALTTEAVLGSRRPFDARIHAARGQQGQIDVARLFRHLLTDTSAIAESHHHCHKVQDPYSLRCQPQVMGACLTQLRQTKEVLLAEANAVSDNPLVFADAGEVISGGNFHAEPVAMAADNLALAIAEIGALSERRIALMMDKHMSQLPPFLVKNGGVNSGFMIAQVTAAALASENKALAHPHSVDSLPTSANQEDHVSMAPAAGRRLWEMVANTRGIIAVEWLAACQGIDLREGLTSSPLLEQARQTLRERVAHYTQDRFFAPDIECATALLAQGALQRLVPDFM.

A cross-link (5-imidazolinone (Ala-Gly)) is located at residues 143-145 (ASG). Ser-144 is subject to 2,3-didehydroalanine (Ser).

The protein belongs to the PAL/histidase family. In terms of processing, contains an active site 4-methylidene-imidazol-5-one (MIO), which is formed autocatalytically by cyclization and dehydration of residues Ala-Ser-Gly.

Its subcellular location is the cytoplasm. It catalyses the reaction L-histidine = trans-urocanate + NH4(+). It functions in the pathway amino-acid degradation; L-histidine degradation into L-glutamate; N-formimidoyl-L-glutamate from L-histidine: step 1/3. This is Histidine ammonia-lyase from Salmonella choleraesuis (strain SC-B67).